The chain runs to 392 residues: Elongation factor Tu-3 (392 aa).

The tr-type G domain occupies 10–206 (KPHLNIGTMG…AVDTYVPMPE (197 aa)). Positions 19–26 (GHVDHGKT) are G1. Position 19–26 (19–26 (GHVDHGKT)) interacts with GTP. Threonine 26 is a Mg(2+) binding site. A G2 region spans residues 63–67 (GITIN). The interval 84 to 87 (DMPG) is G3. Residues 84–88 (DMPGH) and 139–142 (NKAD) each bind GTP. Positions 139-142 (NKAD) are G4. The interval 176–178 (SGL) is G5.

The protein belongs to the TRAFAC class translation factor GTPase superfamily. Classic translation factor GTPase family. EF-Tu/EF-1A subfamily. Monomer.

It is found in the cytoplasm. The catalysed reaction is GTP + H2O = GDP + phosphate + H(+). In terms of biological role, GTP hydrolase that promotes the GTP-dependent binding of aminoacyl-tRNA to the A-site of ribosomes during protein biosynthesis. This Streptomyces coelicolor (strain ATCC BAA-471 / A3(2) / M145) protein is Elongation factor Tu-3.